The chain runs to 160 residues: Small ribosomal subunit protein uS7 (160 aa).

Belongs to the universal ribosomal protein uS7 family. In terms of assembly, part of the 30S ribosomal subunit. Contacts proteins S9 and S11.

Its function is as follows. One of the primary rRNA binding proteins, it binds directly to 16S rRNA where it nucleates assembly of the head domain of the 30S subunit. Is located at the subunit interface close to the decoding center, probably blocks exit of the E-site tRNA. This Ehrlichia canis (strain Jake) protein is Small ribosomal subunit protein uS7.